A 275-amino-acid chain; its full sequence is Undecaprenyl-diphosphatase (275 aa).

Helical transmembrane passes span 8 to 28, 45 to 65, 92 to 112, 119 to 139, 197 to 217, 225 to 245, and 255 to 275; these read WTIV…PIPI, ARGL…VLII, FMFV…GVLF, FIGE…AAAI, FSFL…IPNI, ELWI…YFAL, and GNLK…LIFL.

This sequence belongs to the UppP family.

The protein resides in the cell membrane. The catalysed reaction is di-trans,octa-cis-undecaprenyl diphosphate + H2O = di-trans,octa-cis-undecaprenyl phosphate + phosphate + H(+). In terms of biological role, catalyzes the dephosphorylation of undecaprenyl diphosphate (UPP). Confers resistance to bacitracin. The polypeptide is Undecaprenyl-diphosphatase (Oceanobacillus iheyensis (strain DSM 14371 / CIP 107618 / JCM 11309 / KCTC 3954 / HTE831)).